The chain runs to 302 residues: N-acetyl-D-glucosamine kinase (302 aa).

ATP contacts are provided by residues 4 to 11 (GFDVGGTK) and 133 to 140 (GFGGGFIY). Zn(2+)-binding residues include histidine 157, cysteine 177, cysteine 179, and cysteine 184.

The protein belongs to the ROK (NagC/XylR) family. NagK subfamily.

The catalysed reaction is N-acetyl-D-glucosamine + ATP = N-acetyl-D-glucosamine 6-phosphate + ADP + H(+). The protein operates within cell wall biogenesis; peptidoglycan recycling. In terms of biological role, catalyzes the phosphorylation of N-acetyl-D-glucosamine (GlcNAc) derived from cell-wall degradation, yielding GlcNAc-6-P. This chain is N-acetyl-D-glucosamine kinase, found in Vibrio parahaemolyticus serotype O3:K6 (strain RIMD 2210633).